The chain runs to 246 residues: MRSGVIAQKVGMTRVFTDAGEHVPVTVLKVDQCQVVAHRTVEKNGYVALQVGVGKAKVKNVSKAERGRFAIAKVEPKRKLAEFRVTEDALIPVGAEITADHFIPGQFVDVTGTTTGKGFAGGMKRWNFGGLRATHGVSISHRSIGSTGGRQDPGKTFKNKKMPGHLGVERVTTQNLRVVRTDPERGLILVEGAVPGVAGGWIQIRDAVKRKLPAEAPMPGKFRELADGAAPAVDAAPEAPAVEENA.

A disordered region spans residues 140–162; sequence SHRSIGSTGGRQDPGKTFKNKKM. Residue Gln151 is modified to N5-methylglutamine.

This sequence belongs to the universal ribosomal protein uL3 family. Part of the 50S ribosomal subunit. Forms a cluster with proteins L14 and L19. Post-translationally, methylated by PrmB.

In terms of biological role, one of the primary rRNA binding proteins, it binds directly near the 3'-end of the 23S rRNA, where it nucleates assembly of the 50S subunit. The sequence is that of Large ribosomal subunit protein uL3 from Methylobacterium sp. (strain 4-46).